The primary structure comprises 93 residues: Cobalt transport protein CbiN (93 aa).

A run of 2 helical transmembrane segments spans residues 5–25 (LMLL…NHGG) and 63–83 (LLFT…LGYC).

Belongs to the CbiN family. Forms an energy-coupling factor (ECF) transporter complex composed of an ATP-binding protein (A component, CbiO), a transmembrane protein (T component, CbiQ) and 2 possible substrate-capture proteins (S components, CbiM and CbiN) of unknown stoichimetry.

Its subcellular location is the cell inner membrane. The protein operates within cofactor biosynthesis; adenosylcobalamin biosynthesis. Part of the energy-coupling factor (ECF) transporter complex CbiMNOQ involved in cobalt import. The protein is Cobalt transport protein CbiN of Salmonella gallinarum (strain 287/91 / NCTC 13346).